The sequence spans 427 residues: Glutamate-1-semialdehyde 2,1-aminomutase (427 aa).

Lys-267 bears the N6-(pyridoxal phosphate)lysine mark.

Belongs to the class-III pyridoxal-phosphate-dependent aminotransferase family. HemL subfamily. Homodimer. The cofactor is pyridoxal 5'-phosphate.

It is found in the cytoplasm. It carries out the reaction (S)-4-amino-5-oxopentanoate = 5-aminolevulinate. The protein operates within porphyrin-containing compound metabolism; protoporphyrin-IX biosynthesis; 5-aminolevulinate from L-glutamyl-tRNA(Glu): step 2/2. The sequence is that of Glutamate-1-semialdehyde 2,1-aminomutase from Geotalea uraniireducens (strain Rf4) (Geobacter uraniireducens).